A 337-amino-acid polypeptide reads, in one-letter code: Ferrochelatase (337 aa).

Fe cation is bound by residues histidine 189 and glutamate 293.

Belongs to the ferrochelatase family.

The protein resides in the cytoplasm. The enzyme catalyses heme b + 2 H(+) = protoporphyrin IX + Fe(2+). The protein operates within porphyrin-containing compound metabolism; protoheme biosynthesis; protoheme from protoporphyrin-IX: step 1/1. Its function is as follows. Catalyzes the ferrous insertion into protoporphyrin IX. The chain is Ferrochelatase from Pseudomonas entomophila (strain L48).